The chain runs to 69 residues: Disintegrin VLO5B (69 aa).

The 66-residue stretch at 1–66 (MNSANPCCDP…DCPRNPWKSE (66 aa)) folds into the Disintegrin domain. Intrachain disulfides connect Cys7–Cys30, Cys21–Cys27, Cys26–Cys51, and Cys39–Cys58. The Cell attachment site; atypical (MLD) signature appears at 43 to 45 (MLD).

This sequence belongs to the disintegrin family. Dimeric disintegrin subfamily. As to quaternary structure, heterodimer with VLO5A; disulfide-linked. In terms of tissue distribution, expressed by the venom gland.

It is found in the secreted. Its function is as follows. Poor inhibitor of platelet aggregation. The disintegrin inhibits the adhesion of the alpha-4/beta-1 (ITGA4/ITGB1) integrin to VCAM-1. Inhibition on alpha-2b/beta-3 (ITGA2B/ITGB3) is low. The protein is Disintegrin VLO5B of Macrovipera lebetina obtusa (Levant blunt-nosed viper).